The chain runs to 270 residues: Gap junction beta-3 protein (270 aa).

Residues 1–20 (MDWKTLQALLSGVNKYSTAF) lie on the Cytoplasmic side of the membrane. Residues 21–40 (GRIWLSVVFVFRVLVYVVAA) form a helical membrane-spanning segment. The Extracellular segment spans residues 41-75 (ERVWGDEQKDFDCNTKQPGCTNVCYDNYFPISNIR). A helical membrane pass occupies residues 76 to 98 (LWALQLIFVTCPSLLVILHVAYR). Residues 99–126 (EERERRHRQKHGDQCAKLYDNAGKKHGG) lie on the Cytoplasmic side of the membrane. A helical membrane pass occupies residues 127-149 (LWWTYLFSLIFKLIIEFLFLYLL). Residues 150 to 187 (HTLWHGFNMPRLVQCANVAPCPNIVDCYIARPTEKKIF) lie on the Extracellular side of the membrane. Residues 188-210 (TYFMVGASAVCIVLTICELCYLI) traverse the membrane as a helical segment. Residues 211–270 (CHRVLRGLHKDKPRGGCSPSSSASRASTCRCHHKLVEAGEVDPDPGNNKLQASAPNLTPI) are Cytoplasmic-facing. The interval 250-270 (EVDPDPGNNKLQASAPNLTPI) is disordered. Polar residues predominate over residues 258-270 (NKLQASAPNLTPI).

The protein belongs to the connexin family. Beta-type (group I) subfamily. In terms of assembly, a connexon is composed of a hexamer of connexins. Interacts with CNST.

The protein localises to the cell membrane. It is found in the cell junction. It localises to the gap junction. In terms of biological role, one gap junction consists of a cluster of closely packed pairs of transmembrane channels, the connexons, through which materials of low MW diffuse from one cell to a neighboring cell. The protein is Gap junction beta-3 protein (GJB3) of Homo sapiens (Human).